A 156-amino-acid chain; its full sequence is Probable cyclic pyranopterin monophosphate synthase (156 aa).

Substrate contacts are provided by residues 74 to 76 (LCH) and 110 to 111 (ME). Aspartate 125 is an active-site residue.

It belongs to the MoaC family. As to quaternary structure, homohexamer; trimer of dimers.

It catalyses the reaction (8S)-3',8-cyclo-7,8-dihydroguanosine 5'-triphosphate = cyclic pyranopterin phosphate + diphosphate. It functions in the pathway cofactor biosynthesis; molybdopterin biosynthesis. In terms of biological role, catalyzes the conversion of (8S)-3',8-cyclo-7,8-dihydroguanosine 5'-triphosphate to cyclic pyranopterin monophosphate (cPMP). The protein is Probable cyclic pyranopterin monophosphate synthase of Thermococcus kodakarensis (strain ATCC BAA-918 / JCM 12380 / KOD1) (Pyrococcus kodakaraensis (strain KOD1)).